The primary structure comprises 363 residues: Anthranilate phosphoribosyltransferase (363 aa).

5-phospho-alpha-D-ribose 1-diphosphate is bound by residues Gly-85, Gly-88–Asp-89, Thr-93, Asn-95–Thr-98, Lys-113–Ser-121, and Ala-125. Gly-85 is a binding site for anthranilate. Position 97 (Ser-97) interacts with Mg(2+). Position 116 (Asn-116) interacts with anthranilate. Arg-171 is an anthranilate binding site. Mg(2+)-binding residues include Asp-233 and Glu-234.

It belongs to the anthranilate phosphoribosyltransferase family. Homodimer. Mg(2+) serves as cofactor.

The catalysed reaction is N-(5-phospho-beta-D-ribosyl)anthranilate + diphosphate = 5-phospho-alpha-D-ribose 1-diphosphate + anthranilate. Its pathway is amino-acid biosynthesis; L-tryptophan biosynthesis; L-tryptophan from chorismate: step 2/5. In terms of biological role, catalyzes the transfer of the phosphoribosyl group of 5-phosphorylribose-1-pyrophosphate (PRPP) to anthranilate to yield N-(5'-phosphoribosyl)-anthranilate (PRA). The chain is Anthranilate phosphoribosyltransferase from Gluconobacter oxydans (strain 621H) (Gluconobacter suboxydans).